The following is a 92-amino-acid chain: Small ribosomal subunit protein uS19 (92 aa).

Belongs to the universal ribosomal protein uS19 family.

Its function is as follows. Protein S19 forms a complex with S13 that binds strongly to the 16S ribosomal RNA. This is Small ribosomal subunit protein uS19 from Methylobacterium nodulans (strain LMG 21967 / CNCM I-2342 / ORS 2060).